A 324-amino-acid chain; its full sequence is tRNA dimethylallyltransferase (324 aa).

Residue 18–25 (GPTAVGKT) coordinates ATP. 20 to 25 (TAVGKT) serves as a coordination point for substrate. The interaction with substrate tRNA stretch occupies residues 43 to 46 (DSRQ).

It belongs to the IPP transferase family. Monomer. The cofactor is Mg(2+).

The catalysed reaction is adenosine(37) in tRNA + dimethylallyl diphosphate = N(6)-dimethylallyladenosine(37) in tRNA + diphosphate. Its function is as follows. Catalyzes the transfer of a dimethylallyl group onto the adenine at position 37 in tRNAs that read codons beginning with uridine, leading to the formation of N6-(dimethylallyl)adenosine (i(6)A). The chain is tRNA dimethylallyltransferase from Salinibacter ruber (strain DSM 13855 / M31).